The primary structure comprises 310 residues: Biotin synthase (310 aa).

The 229-residue stretch at 34–262 (GRVQLCALVN…TAQIRLSAGR (229 aa)) folds into the Radical SAM core domain. Positions 49, 53, and 56 each coordinate [4Fe-4S] cluster. The [2Fe-2S] cluster site is built by Cys-93, Cys-125, Cys-185, and Arg-257.

It belongs to the radical SAM superfamily. Biotin synthase family. In terms of assembly, homodimer. [4Fe-4S] cluster is required as a cofactor. [2Fe-2S] cluster serves as cofactor.

It catalyses the reaction (4R,5S)-dethiobiotin + (sulfur carrier)-SH + 2 reduced [2Fe-2S]-[ferredoxin] + 2 S-adenosyl-L-methionine = (sulfur carrier)-H + biotin + 2 5'-deoxyadenosine + 2 L-methionine + 2 oxidized [2Fe-2S]-[ferredoxin]. It functions in the pathway cofactor biosynthesis; biotin biosynthesis; biotin from 7,8-diaminononanoate: step 2/2. Functionally, catalyzes the conversion of dethiobiotin (DTB) to biotin by the insertion of a sulfur atom into dethiobiotin via a radical-based mechanism. The protein is Biotin synthase of Synechococcus sp. (strain JA-3-3Ab) (Cyanobacteria bacterium Yellowstone A-Prime).